The primary structure comprises 344 residues: Heat-inducible transcription repressor HrcA (344 aa).

This sequence belongs to the HrcA family.

Its function is as follows. Negative regulator of class I heat shock genes (grpE-dnaK-dnaJ and groELS operons). Prevents heat-shock induction of these operons. This is Heat-inducible transcription repressor HrcA from Streptococcus pneumoniae serotype 19F (strain G54).